Here is a 75-residue protein sequence, read N- to C-terminus: Small ribosomal subunit protein eS28 (75 aa).

This sequence belongs to the eukaryotic ribosomal protein eS28 family.

This Natronomonas pharaonis (strain ATCC 35678 / DSM 2160 / CIP 103997 / JCM 8858 / NBRC 14720 / NCIMB 2260 / Gabara) (Halobacterium pharaonis) protein is Small ribosomal subunit protein eS28.